A 360-amino-acid chain; its full sequence is Phospho-N-acetylmuramoyl-pentapeptide-transferase (360 aa).

The next 10 membrane-spanning stretches (helical) occupy residues 27–47 (GAFM…INVL), 71–91 (TPTM…LLWA), 93–113 (WDNP…LIGF), 134–154 (LALG…NHPA), 168–188 (TLIN…VGSA), 199–219 (GLAI…AYAV), 239–259 (ILIF…YNAP), 262–282 (AVFM…AIAV), 288–308 (LVLA…IIQV), and 337–357 (TIVI…LATL).

It belongs to the glycosyltransferase 4 family. MraY subfamily. Mg(2+) serves as cofactor.

It localises to the cell inner membrane. It carries out the reaction UDP-N-acetyl-alpha-D-muramoyl-L-alanyl-gamma-D-glutamyl-meso-2,6-diaminopimeloyl-D-alanyl-D-alanine + di-trans,octa-cis-undecaprenyl phosphate = di-trans,octa-cis-undecaprenyl diphospho-N-acetyl-alpha-D-muramoyl-L-alanyl-D-glutamyl-meso-2,6-diaminopimeloyl-D-alanyl-D-alanine + UMP. It participates in cell wall biogenesis; peptidoglycan biosynthesis. Catalyzes the initial step of the lipid cycle reactions in the biosynthesis of the cell wall peptidoglycan: transfers peptidoglycan precursor phospho-MurNAc-pentapeptide from UDP-MurNAc-pentapeptide onto the lipid carrier undecaprenyl phosphate, yielding undecaprenyl-pyrophosphoryl-MurNAc-pentapeptide, known as lipid I. This chain is Phospho-N-acetylmuramoyl-pentapeptide-transferase, found in Ruegeria pomeroyi (strain ATCC 700808 / DSM 15171 / DSS-3) (Silicibacter pomeroyi).